A 149-amino-acid chain; its full sequence is D-aminoacyl-tRNA deacylase (149 aa).

Positions 137 to 138 match the Gly-cisPro motif, important for rejection of L-amino acids motif; sequence GP.

It belongs to the DTD family. As to quaternary structure, homodimer.

It is found in the cytoplasm. It catalyses the reaction glycyl-tRNA(Ala) + H2O = tRNA(Ala) + glycine + H(+). The catalysed reaction is a D-aminoacyl-tRNA + H2O = a tRNA + a D-alpha-amino acid + H(+). An aminoacyl-tRNA editing enzyme that deacylates mischarged D-aminoacyl-tRNAs. Also deacylates mischarged glycyl-tRNA(Ala), protecting cells against glycine mischarging by AlaRS. Acts via tRNA-based rather than protein-based catalysis; rejects L-amino acids rather than detecting D-amino acids in the active site. By recycling D-aminoacyl-tRNA to D-amino acids and free tRNA molecules, this enzyme counteracts the toxicity associated with the formation of D-aminoacyl-tRNA entities in vivo and helps enforce protein L-homochirality. In Desulforudis audaxviator (strain MP104C), this protein is D-aminoacyl-tRNA deacylase.